A 515-amino-acid polypeptide reads, in one-letter code: NAD(P)H-quinone oxidoreductase subunit 2 (515 aa).

14 helical membrane-spanning segments follow: residues T14–I34, W42–W62, L79–I99, L109–G128, L132–G151, L167–L187, L206–V226, P240–I260, W274–L294, M302–T322, L330–F350, L374–G394, I396–L416, and V462–F482.

The protein belongs to the complex I subunit 2 family. NDH-1 can be composed of about 15 different subunits; different subcomplexes with different compositions have been identified which probably have different functions.

It localises to the cellular thylakoid membrane. The catalysed reaction is a plastoquinone + NADH + (n+1) H(+)(in) = a plastoquinol + NAD(+) + n H(+)(out). It catalyses the reaction a plastoquinone + NADPH + (n+1) H(+)(in) = a plastoquinol + NADP(+) + n H(+)(out). Its function is as follows. NDH-1 shuttles electrons from an unknown electron donor, via FMN and iron-sulfur (Fe-S) centers, to quinones in the respiratory and/or the photosynthetic chain. The immediate electron acceptor for the enzyme in this species is believed to be plastoquinone. Couples the redox reaction to proton translocation, and thus conserves the redox energy in a proton gradient. Cyanobacterial NDH-1 also plays a role in inorganic carbon-concentration. This is NAD(P)H-quinone oxidoreductase subunit 2 from Thermosynechococcus vestitus (strain NIES-2133 / IAM M-273 / BP-1).